Reading from the N-terminus, the 101-residue chain is ATP synthase subunit c (101 aa).

Helical transmembrane passes span 31 to 51 and 81 to 101; these read AFAYLGAGLAMIGVIGVGAGQ and AISETSSIYALLVALILIFVG.

Belongs to the ATPase C chain family. F-type ATPases have 2 components, F(1) - the catalytic core - and F(0) - the membrane proton channel. F(1) has five subunits: alpha(3), beta(3), gamma(1), delta(1), epsilon(1). F(0) has three main subunits: a(1), b(2) and c(10-14). The alpha and beta chains form an alternating ring which encloses part of the gamma chain. F(1) is attached to F(0) by a central stalk formed by the gamma and epsilon chains, while a peripheral stalk is formed by the delta and b chains.

It is found in the cell membrane. F(1)F(0) ATP synthase produces ATP from ADP in the presence of a proton or sodium gradient. F-type ATPases consist of two structural domains, F(1) containing the extramembraneous catalytic core and F(0) containing the membrane proton channel, linked together by a central stalk and a peripheral stalk. During catalysis, ATP synthesis in the catalytic domain of F(1) is coupled via a rotary mechanism of the central stalk subunits to proton translocation. Functionally, key component of the F(0) channel; it plays a direct role in translocation across the membrane. A homomeric c-ring of between 10-14 subunits forms the central stalk rotor element with the F(1) delta and epsilon subunits. The protein is ATP synthase subunit c of Mesomycoplasma hyopneumoniae (strain 7448) (Mycoplasma hyopneumoniae).